A 101-amino-acid chain; its full sequence is Small ribosomal subunit protein uS10 (101 aa).

This sequence belongs to the universal ribosomal protein uS10 family. As to quaternary structure, part of the 30S ribosomal subunit.

In terms of biological role, involved in the binding of tRNA to the ribosomes. This is Small ribosomal subunit protein uS10 from Flavobacterium johnsoniae (strain ATCC 17061 / DSM 2064 / JCM 8514 / BCRC 14874 / CCUG 350202 / NBRC 14942 / NCIMB 11054 / UW101) (Cytophaga johnsonae).